An 887-amino-acid chain; its full sequence is Beta-galactosidase 14 (887 aa).

The first 31 residues, 1-31 (MSKSSRIRMKSRTRYLIAILLVISLCSKASS), serve as a signal peptide directing secretion. E197 acts as the Proton donor in catalysis. E268 functions as the Nucleophile in the catalytic mechanism. N-linked (GlcNAc...) asparagine glycans are attached at residues N269, N300, N395, and N785. In terms of domain architecture, SUEL-type lectin spans 752–838 (KDMRLKAVMR…KTLAVQVKCE (87 aa)). Basic and acidic residues predominate over residues 838 to 852 (EKKEGKQDEKKKKED). Residues 838–887 (EKKEGKQDEKKKKEDKDEEEEDDEDDDEEEEEEDKENKDTKDMENKNQDM) are disordered. The segment covering 853-871 (KDEEEEDDEDDDEEEEEED) has biased composition (acidic residues). The span at 872–887 (KENKDTKDMENKNQDM) shows a compositional bias: basic and acidic residues.

Belongs to the glycosyl hydrolase 35 family.

It is found in the secreted. The protein resides in the extracellular space. It localises to the apoplast. It carries out the reaction Hydrolysis of terminal non-reducing beta-D-galactose residues in beta-D-galactosides.. In Arabidopsis thaliana (Mouse-ear cress), this protein is Beta-galactosidase 14 (BGAL14).